The primary structure comprises 290 residues: tRNA (adenine(58)-N(1))-methyltransferase catalytic subunit TRMT61A (290 aa).

The residue at position 2 (Ser-2) is an N-acetylserine. 5 substrate regions span residues 20 to 22 (LGH), 35 to 42 (QTQTRHGV), 64 to 65 (GW), 85 to 89 (QILYS), and 110 to 117 (SGTGSGSV). S-adenosyl-L-methionine is bound by residues Leu-87, 114-116 (SGS), Glu-135, Arg-140, 163-164 (DV), and Asp-181. 2 substrate regions span residues 180 to 183 (LDIP) and 205 to 212 (SFSPCIEQ). Thr-279 lines the substrate pocket.

The protein belongs to the class I-like SAM-binding methyltransferase superfamily. TRM61 family. As to quaternary structure, heterotetramer; composed of two copies of TRMT6 and two copies of TRMT61A.

Its subcellular location is the nucleus. The enzyme catalyses adenosine(58) in tRNA + S-adenosyl-L-methionine = N(1)-methyladenosine(58) in tRNA + S-adenosyl-L-homocysteine + H(+). It carries out the reaction an adenosine in mRNA + S-adenosyl-L-methionine = an N(1)-methyladenosine in mRNA + S-adenosyl-L-homocysteine + H(+). Catalytic subunit of tRNA (adenine-N(1)-)-methyltransferase, which catalyzes the formation of N(1)-methyladenine at position 58 (m1A58) in initiator methionyl-tRNA. Catalytic subunit of mRNA N(1)-methyltransferase complex, which mediates methylation of adenosine residues at the N(1) position of a small subset of mRNAs: N(1) methylation takes place in tRNA T-loop-like structures of mRNAs and is only present at low stoichiometries. This is tRNA (adenine(58)-N(1))-methyltransferase catalytic subunit TRMT61A (Trmt61a) from Rattus norvegicus (Rat).